A 400-amino-acid chain; its full sequence is Probable glycosyltransferase WbjE (400 aa).

Belongs to the glycosyltransferase group 1 family. Glycosyltransferase 4 subfamily.

It functions in the pathway bacterial outer membrane biogenesis; LPS O-antigen biosynthesis. In Pseudomonas aeruginosa, this protein is Probable glycosyltransferase WbjE (wbjE).